The chain runs to 339 residues: Glycerol-3-phosphate dehydrogenase [NAD(P)+] (339 aa).

NADPH is bound by residues Ser14, Tyr15, His35, and Lys109. Lys109, Gly138, and Thr140 together coordinate sn-glycerol 3-phosphate. Ala142 contributes to the NADPH binding site. The sn-glycerol 3-phosphate site is built by Lys194, Asp247, Ser257, Arg258, and Asn259. Lys194 serves as the catalytic Proton acceptor. Residue Arg258 coordinates NADPH. The NADPH site is built by Val282 and Glu284.

The protein belongs to the NAD-dependent glycerol-3-phosphate dehydrogenase family.

The protein localises to the cytoplasm. It carries out the reaction sn-glycerol 3-phosphate + NAD(+) = dihydroxyacetone phosphate + NADH + H(+). It catalyses the reaction sn-glycerol 3-phosphate + NADP(+) = dihydroxyacetone phosphate + NADPH + H(+). The protein operates within membrane lipid metabolism; glycerophospholipid metabolism. Its function is as follows. Catalyzes the reduction of the glycolytic intermediate dihydroxyacetone phosphate (DHAP) to sn-glycerol 3-phosphate (G3P), the key precursor for phospholipid synthesis. This Shewanella halifaxensis (strain HAW-EB4) protein is Glycerol-3-phosphate dehydrogenase [NAD(P)+].